The chain runs to 412 residues: Early growth response protein 2b (412 aa).

A disordered region spans residues 269–299 (YTPQNLPLRPILRPRKYPNRPSKTPVHERPY). 3 C2H2-type zinc fingers span residues 299–323 (YPCPAEGCDRRFSRSDELTRHIRIH), 329–351 (FQCRICMRNFSRSDHLTTHIRTH), and 357–379 (FACDFCGRKFARSDERKRHTKIH). The tract at residues 371–412 (ERKRHTKIHLRQKERKSSSSSTGVSSSERGVATSICSSSSNQ) is disordered. The segment covering 374-384 (RHTKIHLRQKE) has biased composition (basic residues). The segment covering 388–401 (SSSSTGVSSSERGV) has biased composition (low complexity).

It belongs to the EGR C2H2-type zinc-finger protein family.

Its subcellular location is the nucleus. In terms of biological role, sequence-specific DNA-binding transcription factor. Binds to two specific DNA sites located in the promoter region of HOXA4. The sequence is that of Early growth response protein 2b (egr2b) from Danio rerio (Zebrafish).